We begin with the raw amino-acid sequence, 326 residues long: MNMSQNLDFIHSAQRTIGLERDAVDSLLARIGDDFVKACELLLAGKGRVVVVGMGKSGHVGKKIAATLASTGTPSFFVHPAEASHGDMGMITKDDVVLALSNSGSTAEIVTLLPLIKRLGITLISMTGNPESPLAKAAEVNLDASVGQEACPLNLAPTSSTTVTLVLGDALAIALLEARGFTAEDFAFSHPGGALGRRLLLKVEDVMHVGEGLPQVLLGTSLTGALMEMTRKGLGMTVVLDEHGKLAGIFTDGDLRRALDRGIDVRQVTIDQVMTVHGKTVRAEILAAEALKIMEDNKIGALVVVDADDRPVGALNMHDLLRAGVM.

One can recognise an SIS domain in the interval 38–181 (ACELLLAGKG…AIALLEARGF (144 aa)). Substrate is bound by residues 72–73 (GT), histidine 79, histidine 85, 111–120 (TLLPLIKRLG), and 145–147 (SVG). Position 79 (histidine 79) interacts with Zn(2+). CBS domains follow at residues 207–265 (MHVG…GIDV) and 274–326 (MTVH…AGVM).

The protein belongs to the SIS family. GutQ/KpsF subfamily. In terms of assembly, homotetramer.

It catalyses the reaction D-arabinose 5-phosphate = D-ribulose 5-phosphate. It participates in carbohydrate biosynthesis; 3-deoxy-D-manno-octulosonate biosynthesis; 3-deoxy-D-manno-octulosonate from D-ribulose 5-phosphate: step 1/3. It functions in the pathway bacterial outer membrane biogenesis; lipopolysaccharide biosynthesis. In terms of biological role, involved in the biosynthesis of 3-deoxy-D-manno-octulosonate (KDO), a unique 8-carbon sugar component of lipopolysaccharides (LPSs). Catalyzes the reversible aldol-ketol isomerization between D-ribulose 5-phosphate (Ru5P) and D-arabinose 5-phosphate (A5P). The polypeptide is Arabinose 5-phosphate isomerase KdsD (kdsD) (Pseudomonas aeruginosa (strain ATCC 15692 / DSM 22644 / CIP 104116 / JCM 14847 / LMG 12228 / 1C / PRS 101 / PAO1)).